A 479-amino-acid polypeptide reads, in one-letter code: Baeyer-Villiger monooxygenase AacuH (479 aa).

Residues 14 to 34 (DSLGHPDGASRPPVSAESLSR) are disordered.

It belongs to the AflY oxidoreductase family.

It participates in secondary metabolite biosynthesis. Its function is as follows. Baeyer-Villiger monooxygenase; part of the gene cluster that mediates the biosynthesis of the tetrahydroxanthone dimer secalonic acid D. The pathway begins with the synthesis of atrochrysone thioester by the polyketide synthase AacuL. The atrochrysone carboxyl ACP thioesterase AacuM then breaks the thioester bond and releases the atrochrysone carboxylic acid from AacuL. Atrochrysone carboxylic acid is decarboxylated by the decarboxylase AacuI, and oxidized by the anthrone oxygenase AacuG to yield emodin. Emodin is then reduced to emodin hydroquinone by a yet unidentified oxidoreductase. A-ring reduction by the short chain dehydrogenase AacuN, dehydration by the scytalone dehydratase-like protein AacuK and probable spontaneous re-oxidation, results in overall deoxygenation to chrysophanol. Baeyer-Villiger oxidation by the Baeyer-Villiger monooxygenase (BVMO) AacuH then yields monodictyphenone. Monodictyphenone is transformed into compounds with the tetrahydroxanthone skeleton via methylesterification by the methyltransferase AacuQ, followed by the action of the flavin-dependent monooxygenase AacuC, the isomerase AacuP, and the short chain dehydrogenase/reductase AacuF or AacuD. AacuF and AacuD should accept the same compound as a substrate but perform the ketoreduction with a different stereoselectivity, thus yielding blennolides B and A, respectively. In the final step of the biosynthesis, the cytochrome P450 monooxygenase AacuE accepts blennolide B and/or blennolide A to conduct the dimerization reaction to furnish the tetrahydroxanthone dimers, secalonic acids D, B, and F. This chain is Baeyer-Villiger monooxygenase AacuH, found in Aspergillus aculeatus (strain ATCC 16872 / CBS 172.66 / WB 5094).